The primary structure comprises 26 residues: L-amino-acid oxidase (26 aa).

The protein belongs to the flavin monoamine oxidase family. Monomer. FAD serves as cofactor. In terms of processing, not glycosylated. Expressed by the ink gland.

The protein localises to the secreted. The catalysed reaction is an L-alpha-amino acid + O2 + H2O = a 2-oxocarboxylate + H2O2 + NH4(+). Functionally, catalyzes the oxidative deamination of positively charged L-amino acids L-Lys and L-Arg but not of amino acids L-His, L-Asp or L-Glu. Has antibacterial activity against the Gram-positive bacterium S.aureus (MIC=15 ug/ml). This antibacterial activity is bacteriostatic in the absence of amino acids L-Lys or L-Arg but bactericidal in their presence. The antibacterial effect is largely dependent on H(2)O(2) produced in the oxidative deamination of substrates. Has hemagglutinating activity towards rabbit erythrocytes. Hemagglutinating activity is inhibited by the glycoprotein fetuin, but not by glucose, mannose, galactose, N-acetylglucosamine, N-acetylgalactosamine or sialic acid. This Aplysia dactylomela (Spotted sea hare) protein is L-amino-acid oxidase.